The primary structure comprises 508 residues: Cytochrome P450 4A12B (508 aa).

An N-terminal signal peptide occupies residues 1–37; that stretch reads MSASALSSIRFPGSISEYLQVASVLSLLLLLFKTAQL. Residues Glu-319 and Cys-455 each contribute to the heme site.

This sequence belongs to the cytochrome P450 family. It depends on heme as a cofactor. As to expression, expressed in lung, but almost undetectable in the kidneys of five different strains.

The protein resides in the endoplasmic reticulum membrane. It localises to the microsome membrane. It catalyses the reaction an organic molecule + reduced [NADPH--hemoprotein reductase] + O2 = an alcohol + oxidized [NADPH--hemoprotein reductase] + H2O + H(+). It carries out the reaction dodecanoate + reduced [NADPH--hemoprotein reductase] + O2 = 11-hydroxydodecanoate + oxidized [NADPH--hemoprotein reductase] + H2O + H(+). The enzyme catalyses dodecanoate + reduced [NADPH--hemoprotein reductase] + O2 = 12-hydroxydodecanoate + oxidized [NADPH--hemoprotein reductase] + H2O + H(+). The catalysed reaction is (5Z,8Z,11Z,14Z)-eicosatetraenoate + reduced [NADPH--hemoprotein reductase] + O2 = 18-hydroxy-(5Z,8Z,11Z,14Z)-eicosatetraenoate + oxidized [NADPH--hemoprotein reductase] + H2O + H(+). It catalyses the reaction (5Z,8Z,11Z,14Z)-eicosatetraenoate + reduced [NADPH--hemoprotein reductase] + O2 = 19-hydroxy-(5Z,8Z,11Z,14Z)-eicosatetraenoate + oxidized [NADPH--hemoprotein reductase] + H2O + H(+). It carries out the reaction (5Z,8Z,11Z,14Z)-eicosatetraenoate + reduced [NADPH--hemoprotein reductase] + O2 = 20-hydroxy-(5Z,8Z,11Z,14Z)-eicosatetraenoate + oxidized [NADPH--hemoprotein reductase] + H2O + H(+). The enzyme catalyses (5Z,8Z,11Z,14Z,17Z)-eicosapentaenoate + reduced [NADPH--hemoprotein reductase] + O2 = 19-hydroxy-(5Z,8Z,11Z,14Z,17Z)-eicosapentaenoate + oxidized [NADPH--hemoprotein reductase] + H2O + H(+). The catalysed reaction is (5Z,8Z,11Z,14Z,17Z)-eicosapentaenoate + reduced [NADPH--hemoprotein reductase] + O2 = 20-hydroxy-(5Z,8Z,11Z,14Z,17Z)-eicosapentaenoate + oxidized [NADPH--hemoprotein reductase] + H2O + H(+). It catalyses the reaction (5Z,8Z,11Z,14Z,17Z)-eicosapentaenoate + reduced [NADPH--hemoprotein reductase] + O2 = (17S,18R)-epoxy-(5Z,8Z,11Z,14Z)-eicosatetraenoate + oxidized [NADPH--hemoprotein reductase] + H2O + H(+). It carries out the reaction (5Z,8Z,11Z,14Z,17Z)-eicosapentaenoate + reduced [NADPH--hemoprotein reductase] + O2 = (17R,18S)-epoxy-(5Z,8Z,11Z,14Z)-eicosatetraenoate + oxidized [NADPH--hemoprotein reductase] + H2O + H(+). It functions in the pathway lipid metabolism; fatty acid metabolism. With respect to regulation, activated by cytochrome b5. The Vmax almost doubles in the presence of cytochrome b5. Its function is as follows. A cytochrome P450 monooxygenase involved in the metabolism of fatty acids and their oxygenated derivatives (oxylipins). Mechanistically, uses molecular oxygen inserting one oxygen atom into a substrate, and reducing the second into a water molecule, with two electrons provided by NADPH via cytochrome P450 reductase (CPR; NADPH-ferrihemoprotein reductase). Catalyzes predominantly the oxidation of the terminal carbon (omega-oxidation) of saturated and unsaturated fatty acids. May act as a major omega-hydroxylase for dodecanoic (lauric) acid in kidney. Participates in omega-hydroxylation of (5Z,8Z,11Z,14Z)-eicosatetraenoic acid (arachidonate) to 20-hydroxyeicosatetraenoic acid (20-HETE), a signaling molecule acting both as vasoconstrictive and natriuretic with overall effect on arterial blood pressure. Acts as an omega-hydroxylase and epoxidase toward (5Z,8Z,11Z,14Z,17Z)-eicosapentaenoc acid (EPA). Catalyzes the epoxidation of the last double bond of EPA with no preferred stereoselectivity, producing both (R,S) and (S,R) stereoisomers. Can also catalyze the omega-1 and omega-2 oxidation of fatty acids with lower efficiency. This Mus musculus (Mouse) protein is Cytochrome P450 4A12B.